The following is a 122-amino-acid chain: Large ribosomal subunit protein bL17 (122 aa).

It belongs to the bacterial ribosomal protein bL17 family. As to quaternary structure, part of the 50S ribosomal subunit. Contacts protein L32.

The sequence is that of Large ribosomal subunit protein bL17 from Neisseria meningitidis serogroup B (strain ATCC BAA-335 / MC58).